A 252-amino-acid polypeptide reads, in one-letter code: Membrane protein insertase YidC (252 aa).

The N-terminal stretch at 1–19 (MKKVLWIIIIILMVGALAG) is a signal peptide. Cys-20 carries N-palmitoyl cysteine lipidation. Cys-20 carries the S-diacylglycerol cysteine lipid modification. The next 6 helical transmembrane spans lie at 34–54 (IWNH…ADLL), 58–78 (FGLS…PLMI), 131–151 (MAGC…YFAI), 162–182 (FLWF…VAGI), 201–221 (VIIY…PSAL), and 223–243 (LYWV…VVRF).

Belongs to the OXA1/ALB3/YidC family. Type 2 subfamily.

The protein resides in the cell membrane. In terms of biological role, required for the insertion and/or proper folding and/or complex formation of integral membrane proteins into the membrane. Involved in integration of membrane proteins that insert both dependently and independently of the Sec translocase complex, as well as at least some lipoproteins. This is Membrane protein insertase YidC from Alkalihalophilus pseudofirmus (strain ATCC BAA-2126 / JCM 17055 / OF4) (Bacillus pseudofirmus).